The chain runs to 183 residues: uncharacterized protein (183 aa).

A GGDEF domain is found at Pro55–Arg183.

Functionally, might be involved in pSAM2 replication control. This is an uncharacterized protein from Streptomyces ambofaciens.